A 212-amino-acid chain; its full sequence is Orotate phosphoribosyltransferase (212 aa).

5-phospho-alpha-D-ribose 1-diphosphate-binding positions include R97, K101, H103, and 123 to 131; that span reads EDLISTGGS. S127 serves as a coordination point for orotate.

The protein belongs to the purine/pyrimidine phosphoribosyltransferase family. PyrE subfamily. As to quaternary structure, homodimer. Requires Mg(2+) as cofactor.

It carries out the reaction orotidine 5'-phosphate + diphosphate = orotate + 5-phospho-alpha-D-ribose 1-diphosphate. It functions in the pathway pyrimidine metabolism; UMP biosynthesis via de novo pathway; UMP from orotate: step 1/2. Functionally, catalyzes the transfer of a ribosyl phosphate group from 5-phosphoribose 1-diphosphate to orotate, leading to the formation of orotidine monophosphate (OMP). The sequence is that of Orotate phosphoribosyltransferase from Phocaeicola vulgatus (strain ATCC 8482 / DSM 1447 / JCM 5826 / CCUG 4940 / NBRC 14291 / NCTC 11154) (Bacteroides vulgatus).